A 289-amino-acid polypeptide reads, in one-letter code: MQIPRSVGTHDGSFHADEVTACALLIMFDLVDENKIVRTRDPQKLAQCEYVCDVGGRYSTEHKRFDHHQVSYTGSWSSAGMVLDYLHGLGFLSHDEYEYLNNTLVHGVDEQDNGRFFSKEGFCSFSDIIKIYNPLEEGGNTDKEFFFALRFAIDLLTRLREKFCYDRVCRDIVKQVMEKESVCLRFDRPLAWQENFFSLGGESHPAAFVSFPCSDQWILRGIPPTLDRRMEVRIPFPEEWAGLLGDQLVQATGIPGAIFCHKGLFLSVWDSQESCEEALNLVLKQQRLV.

This sequence belongs to the MYG1 family.

The protein is MYG1 protein CT_386 of Chlamydia trachomatis serovar D (strain ATCC VR-885 / DSM 19411 / UW-3/Cx).